The chain runs to 179 residues: Endoribonuclease YbeY (179 aa).

Zn(2+) is bound by residues His-148, His-152, and His-158.

This sequence belongs to the endoribonuclease YbeY family. The cofactor is Zn(2+).

The protein resides in the cytoplasm. Functionally, single strand-specific metallo-endoribonuclease involved in late-stage 70S ribosome quality control and in maturation of the 3' terminus of the 16S rRNA. The chain is Endoribonuclease YbeY from Prochlorococcus marinus (strain MIT 9312).